A 435-amino-acid chain; its full sequence is GTPase Obg (435 aa).

Residues 1-159 (MAFIDKCKIV…IEVVLELKTI (159 aa)) form the Obg domain. Residues 160–329 (ADIGIIGLPN…MLDDVIKIYF (170 aa)) enclose the OBG-type G domain. GTP contacts are provided by residues 166 to 173 (GLPNAGKS), 191 to 195 (FTTLN), 212 to 215 (DIPG), 282 to 285 (NKID), and 310 to 312 (SAL). Mg(2+)-binding residues include Ser-173 and Thr-193. In terms of domain architecture, OCT spans 355–435 (TPKNKELDKT…IYDITLEFEE (81 aa)).

It belongs to the TRAFAC class OBG-HflX-like GTPase superfamily. OBG GTPase family. In terms of assembly, monomer. Requires Mg(2+) as cofactor.

The protein resides in the cytoplasm. Its function is as follows. An essential GTPase which binds GTP, GDP and possibly (p)ppGpp with moderate affinity, with high nucleotide exchange rates and a fairly low GTP hydrolysis rate. Plays a role in control of the cell cycle, stress response, ribosome biogenesis and in those bacteria that undergo differentiation, in morphogenesis control. In Ureaplasma urealyticum serovar 10 (strain ATCC 33699 / Western), this protein is GTPase Obg.